Consider the following 190-residue polypeptide: GTP cyclohydrolase 1 (190 aa).

Residues Cys80, His83, and Cys151 each coordinate Zn(2+).

The protein belongs to the GTP cyclohydrolase I family. In terms of assembly, toroid-shaped homodecamer, composed of two pentamers of five dimers.

It catalyses the reaction GTP + H2O = 7,8-dihydroneopterin 3'-triphosphate + formate + H(+). Its pathway is cofactor biosynthesis; 7,8-dihydroneopterin triphosphate biosynthesis; 7,8-dihydroneopterin triphosphate from GTP: step 1/1. The sequence is that of GTP cyclohydrolase 1 from Rickettsia felis (strain ATCC VR-1525 / URRWXCal2) (Rickettsia azadi).